Reading from the N-terminus, the 381-residue chain is Tafazzin (381 aa).

The Mitochondrial intermembrane portion of the chain corresponds to 1-25 (MSFRDVLERGDEFLEAYPRRSPLWR). Residues 26 to 47 (FLSYSTSLLTFGVSKLLLFTCY) lie within the membrane without spanning it. The Mitochondrial intermembrane segment spans residues 48-381 (NVKLNGFEKL…PEGKPKGKDD (334 aa)). The short motif at 77–82 (HMSMVD) is the HXXXXD motif element. A required for membrane insertion region spans residues 215-232 (LEATKPPIVVPIFATGFE).

Belongs to the taffazin family.

The protein resides in the mitochondrion outer membrane. The protein localises to the mitochondrion inner membrane. It carries out the reaction 1'-[1,2-diacyl-sn-glycero-3-phospho],3'-[1-acyl-sn-glycero-3-phospho]-glycerol + a 1,2-diacyl-sn-glycero-3-phosphocholine = a cardiolipin + a 1-acyl-sn-glycero-3-phosphocholine. It catalyses the reaction 1,2-di-(9Z,12Z-octadecadienoyl)-sn-glycero-3-phosphocholine + 1'-[1,2-di-(9Z,12Z-octadecadienoyl)-sn-glycero-3-phospho]-3'-[1-(9Z,12Z-octadecadienoyl)-sn-glycero-3-phospho]-glycerol = 1-(9Z,12Z)-octadecadienoyl-sn-glycero-3-phosphocholine + 1',3'-bis-[1,2-di-(9Z,12Z-octadecadienoyl)-sn-glycero-3-phospho]-glycerol. The catalysed reaction is 1'-[1,2-di-(9Z-octadecenoyl)-sn-glycero-3-phospho]-3'-[1-(9Z-octadecenoyl)-2-hexadecanoyl-sn-glycero-3-phospho]-glycerol + 1-hexadecanoyl-sn-glycero-3-phosphocholine = 1'-[1,2-di-(9Z-octadecenoyl)-sn-glycero-3-phospho]-3'-[1-(9Z-octadecenoyl)-sn-glycero-3-phospho]-glycerol + 1,2-dihexadecanoyl-sn-glycero-3-phosphocholine. The enzyme catalyses 1'-[1,2-di-(9Z-octadecenoyl)-sn-glycero-3-phospho]-3'-[1-(9Z-octadecenoyl)-2-(9Z-hexadecenoyl)-sn-glycero-3-phospho]-glycerol + 1-(9Z-hexadecenoyl)-sn-glycero-3-phosphocholine = 1,2-di-(9Z-hexadecenoyl)-sn-glycero-3-phosphocholine + 1'-[1,2-di-(9Z-octadecenoyl)-sn-glycero-3-phospho]-3'-[1-(9Z-octadecenoyl)-sn-glycero-3-phospho]-glycerol. It carries out the reaction 1',3'-bis[1,2-di-(9Z-octadecenoyl)-sn-glycero-3-phospho]-glycerol + 1-(9Z-octadecenoyl)-sn-glycero-3-phosphocholine = 1'-[1,2-di-(9Z-octadecenoyl)-sn-glycero-3-phospho]-3'-[1-(9Z-octadecenoyl)-sn-glycero-3-phospho]-glycerol + 1,2-di-(9Z-octadecenoyl)-sn-glycero-3-phosphocholine. It catalyses the reaction 1'-[1,2-di-(9Z-octadecenoyl)-sn-glycero-3-phospho]-3'-[1-(9Z-octadecenoyl)-2-(9Z,12Z-octadecadienoyl)-sn-glycero-3-phospho]-glycerol + 1-(9Z,12Z)-octadecadienoyl-sn-glycero-3-phosphocholine = 1,2-di-(9Z,12Z-octadecadienoyl)-sn-glycero-3-phosphocholine + 1'-[1,2-di-(9Z-octadecenoyl)-sn-glycero-3-phospho]-3'-[1-(9Z-octadecenoyl)-sn-glycero-3-phospho]-glycerol. The catalysed reaction is 1'-[1,2-di-(9Z-octadecenoyl)-sn-glycero-3-phospho]-3'-[1-(9Z-octadecenoyl)-2-(9Z-hexadecenoyl)-sn-glycero-3-phospho]-glycerol + 1-hexadecanoyl-sn-glycero-3-phosphocholine = 1-hexadecanoyl-2-(9Z-hexadecenoyl)-sn-glycero-3-phosphocholine + 1'-[1,2-di-(9Z-octadecenoyl)-sn-glycero-3-phospho]-3'-[1-(9Z-octadecenoyl)-sn-glycero-3-phospho]-glycerol. The enzyme catalyses 1'-[1,2-di-(9Z-octadecenoyl)-sn-glycero-3-phospho]-3'-[1-(9Z-octadecenoyl)-2-hexadecanoyl-sn-glycero-3-phospho]-glycerol + 1-(9Z-hexadecenoyl)-sn-glycero-3-phosphocholine = 1-(9Z-hexadecenoyl)-2-hexadecanoyl-sn-glycero-3-phosphocholine + 1'-[1,2-di-(9Z-octadecenoyl)-sn-glycero-3-phospho]-3'-[1-(9Z-octadecenoyl)-sn-glycero-3-phospho]-glycerol. It carries out the reaction 2 1'-[1,2-diacyl-sn-glycero-3-phospho],3'-[1-acyl-sn-glycero-3-phospho]-glycerol = 1',3'-bis-[1-acyl-sn-glycero-3-phospho]-glycerol + a cardiolipin. It catalyses the reaction 2 1'-[1,2-di-(9Z-octadecenoyl)-sn-glycero-3-phospho]-3'-[1-(9Z-octadecenoyl)-sn-glycero-3-phospho]-glycerol = 1',3'-bis-[1-(9Z-octadecenoyl)-sn-glycero-3-phospho]-glycerol + 1',3'-bis[1,2-di-(9Z-octadecenoyl)-sn-glycero-3-phospho]-glycerol. The catalysed reaction is 1,2-di-(9Z-hexadecenoyl)-sn-glycero-3-phosphocholine + 1-hexadecanoyl-sn-glycero-3-phosphocholine = 1-hexadecanoyl-2-(9Z-hexadecenoyl)-sn-glycero-3-phosphocholine + 1-(9Z-hexadecenoyl)-sn-glycero-3-phosphocholine. The enzyme catalyses 1'-[1,2-di-(9Z,12Z-octadecadienoyl)-sn-glycero-3-phospho]-3'-[1-(9Z,12Z-octadecadienoyl)-sn-glycero-3-phospho]-glycerol + 1,2-di-(9Z-octadecenoyl)-sn-glycero-3-phosphocholine = 1'-[1,2-di-(9Z,12Z-octadecadienoyl)-sn-glycero-3-phospho]-3'-[1-(9Z,12Z-octadecadienoyl)-2-(9Z-octadecenoyl)-sn-glycero-3-phospho]-glycerol + 1-(9Z-octadecenoyl)-sn-glycero-3-phosphocholine. Its pathway is phospholipid metabolism. Acyltransferase required to remodel newly synthesized phospholipid cardiolipin (1',3'-bis-[1,2-diacyl-sn-glycero-3-phospho]-glycerol or CL), a key component of the mitochondrial inner membrane, with tissue specific acyl chains necessary for adequate mitochondrial function. Its role in cellular physiology is to improve mitochondrial performance. CL is critical for the coassembly of lipids and proteins in mitochondrial membranes, for instance, remodeling of the acyl groups of CL in the mitochondrial inner membrane affects the assembly and stability of respiratory chain complex IV and its supercomplex forms. Catalyzes the transacylation between phospholipids and lysophospholipids, with the highest rate being between phosphatidylcholine (1,2-diacyl-sn-glycero-3-phosphocholine or PC) and CL. Catalyzes both 1-acyl-sn-glycero-3-phosphocholine (lysophosphatidylcholine or LPC) reacylation and PC-CL transacylation, that means, it exchanges acyl groups between CL and PC by a combination of forward and reverse transacylations. Also catalyzes transacylations between other phospholipids such as phosphatidylethanolamine (1,2-diacyl-sn-glycero-3-phosphoethanolamine or PE) and CL, between PC and PE, and between PC and phosphatidate (1,2-diacyl-sn-glycero-3-phosphate or PA), although at lower rate. Not regiospecific, it transfers acyl groups into any of the sn-1 and sn-2 positions of the monolysocardiolipin (MLCL), which is an important prerequisite for uniformity and symmetry in CL acyl distribution. Cannot transacylate dilysocardiolipin (DLCL), thus, the role of MLCL is limited to that of an acyl acceptor. CoA-independent, it can reshuffle molecular species within a single phospholipid class. Redistributes fatty acids between MLCL, CL, and other lipids, which prolongs the half-life of CL. Its action is completely reversible, which allows for cyclic changes, such as fission and fusion or bending and flattening of the membrane. Hence, by contributing to the flexibility of the lipid composition, it plays an important role in the dynamics of mitochondria membranes. Essential for the final stage of spermatogenesis, spermatid individualization. Required for the initiation of mitophagy. This Saccharomyces cerevisiae (strain ATCC 204508 / S288c) (Baker's yeast) protein is Tafazzin (TAZ1).